Reading from the N-terminus, the 122-residue chain is Venom protein 7.1 (122 aa).

Positions 1-19 (MRFSIISASLVLIFANVKA) are cleaved as a signal peptide.

Contains 3 disulfide bonds. Expressed by the venom gland.

Its subcellular location is the secreted. In Lychas mucronatus (Chinese swimming scorpion), this protein is Venom protein 7.1.